Here is a 280-residue protein sequence, read N- to C-terminus: Manganese import system permease protein ScaB (280 aa).

A run of 8 helical transmembrane segments spans residues 18–38, 61–81, 94–114, 139–159, 174–194, 196–216, 222–242, and 246–266; these read ALITAIAIGIVAGAVGCFIIL, ILGINFFIGAIVFGLLASILI, TAIGITFSSFLALGVILIGVA, TIGVGVTVLLVICLLFRPLLL, VKIYHYLLMVLLTLVSVTAMQ, VGTILIVAMLITPAATAYLYA, MMLLSSSLGALASILGLFIGY, and IAVGSCIVLTSAVFFLISFFI.

It belongs to the ABC-3 integral membrane protein family.

The protein localises to the cell membrane. Functionally, part of an ABC transporter complex involved in manganese import. The sequence is that of Manganese import system permease protein ScaB from Streptococcus parasanguinis.